The following is a 216-amino-acid chain: Small ribosomal subunit protein uS3 (216 aa).

The KH type-2 domain maps to 24-93 (IKEFLEYRLA…NPQIDVIDVS (70 aa)).

It belongs to the universal ribosomal protein uS3 family. Part of the 30S ribosomal subunit.

Binds the lower part of the 30S subunit head. This chain is Small ribosomal subunit protein uS3, found in Pyrobaculum calidifontis (strain DSM 21063 / JCM 11548 / VA1).